Reading from the N-terminus, the 126-residue chain is UPF0102 protein P9303_16141 (126 aa).

The protein belongs to the UPF0102 family.

The protein is UPF0102 protein P9303_16141 of Prochlorococcus marinus (strain MIT 9303).